A 1035-amino-acid polypeptide reads, in one-letter code: Protein SEY1 homolog (1035 aa).

In terms of domain architecture, GB1/RHD3-type G spans 32 to 267 (DGTFICVSVF…TTLIPLTDSS (236 aa)). Residue 42 to 49 (GPQSSGKS) coordinates GTP.

The protein belongs to the TRAFAC class dynamin-like GTPase superfamily. GB1/RHD3 GTPase family. RHD3 subfamily.

Its subcellular location is the endoplasmic reticulum membrane. Functionally, probable GTP-binding protein that may be involved in cell development. This is Protein SEY1 homolog from Giardia intestinalis (strain ATCC 50803 / WB clone C6) (Giardia lamblia).